The following is a 335-amino-acid chain: L-carnitine dehydrogenase (335 aa).

Gly29–Gly34 lines the NAD(+) pocket.

The protein belongs to the 3-hydroxyacyl-CoA dehydrogenase family. L-carnitine dehydrogenase subfamily. Homodimer.

Its subcellular location is the cytoplasm. The enzyme catalyses carnitine + NAD(+) = 3-dehydrocarnitine + NADH + H(+). It participates in amine and polyamine metabolism; carnitine metabolism. In terms of biological role, catalyzes the NAD(+)-dependent oxidation of L-carnitine to 3-dehydrocarnitine. This is L-carnitine dehydrogenase from Streptomyces griseus subsp. griseus (strain JCM 4626 / CBS 651.72 / NBRC 13350 / KCC S-0626 / ISP 5235).